Consider the following 254-residue polypeptide: 5-oxoprolinase subunit A (254 aa).

It belongs to the LamB/PxpA family. In terms of assembly, forms a complex composed of PxpA, PxpB and PxpC.

It catalyses the reaction 5-oxo-L-proline + ATP + 2 H2O = L-glutamate + ADP + phosphate + H(+). In terms of biological role, catalyzes the cleavage of 5-oxoproline to form L-glutamate coupled to the hydrolysis of ATP to ADP and inorganic phosphate. This is 5-oxoprolinase subunit A from Brevibacillus brevis (strain 47 / JCM 6285 / NBRC 100599).